Reading from the N-terminus, the 62-residue chain is Neurotoxin 3 (62 aa).

Positions 1 to 16 are enriched in polar residues; it reads LECHDQQSSQTPTTTG. The interval 1-22 is disordered; the sequence is LECHDQQSSQTPTTTGCSGGET. 4 disulfides stabilise this stretch: Cys3–Cys24, Cys17–Cys41, Cys43–Cys54, and Cys55–Cys60.

It belongs to the three-finger toxin family. Short-chain subfamily. Type I alpha-neurotoxin sub-subfamily. In terms of tissue distribution, expressed by the venom gland.

Its subcellular location is the secreted. Its function is as follows. Binds to muscle nicotinic acetylcholine receptor (nAChR) and inhibit acetylcholine from binding to the receptor, thereby impairing neuromuscular transmission. This chain is Neurotoxin 3, found in Naja sputatrix (Malayan spitting cobra).